Here is a 1364-residue protein sequence, read N- to C-terminus: MTFHFHIPLAFRDLLKSGGIGQYVVQEVLPVRHVDAQFAAFQTSFRTEAPLCILQHFDTLYSILHHFRSLDIAIKEDVLEVMVKVASRHANELPAILEDLNLSVPQRAAHLNALKMNCFILTQLIEAFEAETYKASLGSVEPSGKGKKAKSKPEGFSWESERESILQALTHLLQLDIRRLWSMSVVEEEFVSMMTSCCYKMMENPNIVMAKNKSTREALGHLLGVTVKRYNHMLSASVKVIQLLQHFEHLASVLVHTVSLWATEYGMKPVIGEIMREIGQKCSQDLSRESSGFKAFATFLTELAERIPAIMMPSISVLLDYLDGENYMMRNSVLTVMGEMVVRVLSGDQLEEAEKSSRDQFLDTLQEHLHDVNTYVRSCVIQIYNRIVQEKALPLSRFQSVVTLVVGRLFDKSVNVCKNAIQLLASFLANNPFTCKLSSVDLKVPLEKETKKLKEMREKYQGPKPVVVISPEEEWEAMLPEVLEAFKILQQESKEEEDIETEEIESSQHLREQILILLRKTSYKNSIRLTQKGIERFQEDPLFSEGDSEAKSELGILEKIFTEKKADLEQPTTKDQDDAQVNPTSEELPSQEVQNSDMDKQEMLVQYLSDAHHFALKIEEAIDVISKMMYETAVSVVQEVIEFFVTVSQFGVSQALLGVRRMLPLVWSKEPGVREAVLSAYRRLYLSSNGESERVKAQALVRSLSLLMVDSSAGILQCLEEIVSEFVQKGDIHPSVIQLLWEKFTQKSPCSEFERRAAVMLLGMMTRGQPEIVMSNLDTLVSVGLGEQVQKDYQLAREVCNCILKITDSQKQTLGKSTEPFRLPKDHSLFVCLTEAVAGGIGLSGLHWLPFKETAVRLVYELGEEPEEICSEILLRCSQNVLDGHQTQDEVPNVPAFLLTHLLSLAGDVALQQVVHLERAVSAELRRRRVLKEEQEAEKVGKQRKSKANESTMEEELGLVGASADDIEAELIRKICDTELLGGQQYLSAFLPLILRICNNPGRYSDPDLCTVATLALAKYMMISSDFCDTHLRLLFTLLEKSPLPSVRSNIMIALGDLSIRFPNLIEPWTPNLYARLRDPSREVRKTAGMVMTHLILKDMVKVKGQVSEMAVLLIESDQEISALARNFFNELSNKGNAVYNLLPDIISRLSDPDCGVEEEAFRTIMKQLLSYITKDKQTESLVEKMCHRFRTARTERQWRDLAHCLSLLPFSEKGLRKMQDCFDCYGDKLSDEAVYNSFLTTVAKMRRGAKPELKALIDEFEQKLSRCHNKGLENMDVPEEPSAESDAQPPKAKRPPLASVNVKKGKSEDDFQTPKPPASRKSRRKVAVNFSSDEESDLEAELSEAETPKNPTPIRRTARSRAK.

Residues 1–588 form an interaction with XCAP-E and XCAP-C region; it reads MTFHFHIPLA…AQVNPTSEEL (588 aa). Basic and acidic residues predominate over residues 567–577; it reads DLEQPTTKDQD. Disordered regions lie at residues 567–596 and 1273–1364; these read DLEQ…VQNS and LENM…SRAK. The span at 579-596 shows a compositional bias: polar residues; that stretch reads AQVNPTSEELPSQEVQNS. At Thr1314 the chain carries Phosphothreonine; by CDK1. The Bipartite nuclear localization signal signature appears at 1317–1326; it reads PPASRKSRRK. Residues 1333 to 1345 show a composition bias toward acidic residues; the sequence is SDEESDLEAELSE. Phosphothreonine; by CDK1 is present on residues Thr1348 and Thr1353.

Belongs to the CND1 (condensin subunit 1) family. Component of the condensin complex, which contains the XCAP-E/SMC2 and XCAP-C/SMC4 heterodimer, and three non SMC subunits that probably regulate the complex: XCAP-H/NCAPH, XCAP-D2/NCAPD2 and XCAP-G/NCAPG. Phosphorylated by CDK1. Its phosphorylation, as well as that of XCAP-H and XCAP-G subunits, activates the condensin complex and is required for chromosome condensation.

The protein localises to the nucleus. The protein resides in the cytoplasm. It is found in the chromosome. Its function is as follows. Regulatory subunit of the condensin complex, a complex required for conversion of interphase chromatin into mitotic-like condense chromosomes. The condensin complex probably introduces positive supercoils into relaxed DNA in the presence of type I topoisomerases and converts nicked DNA into positive knotted forms in the presence of type II topoisomerases. May target the condensin complex to DNA via its C-terminal domain. In Xenopus laevis (African clawed frog), this protein is Condensin complex subunit 1 (ncapd2).